The sequence spans 156 residues: MKIKKMKIKTINLKIEELINISKNTLFVKNNSSPFFTFDESTCLGYQTIHYSGTDNQKYYIFLLGIKLFRCNKYHLNVIFYNKISNTVERFEPFGNDNKSNSWNIKIFIIKQICNIFNLSKSPIYYDNIQSVLKHNSTDCVFLCLKHLKILLNDLL.

This is an uncharacterized protein from Acheta domesticus (House cricket).